A 230-amino-acid polypeptide reads, in one-letter code: uncharacterized protein (230 aa).

7 helical membrane-spanning segments follow: residues 34–54 (FFAG…MNFQ), 56–76 (VVQY…GLMF), 87–107 (MLFA…GMVI), 111–131 (GLGA…LMSV), 146–166 (MLFI…FLGS), 167–187 (PMFQ…YIAY), and 205–225 (VSLY…IGIF).

It belongs to the BI1 family.

It is found in the cell membrane. This is an uncharacterized protein from Helicobacter pylori (strain ATCC 700392 / 26695) (Campylobacter pylori).